A 311-amino-acid chain; its full sequence is Pyrimidine-specific ribonucleoside hydrolase RihA (311 aa).

H240 is a catalytic residue.

The protein belongs to the IUNH family. RihA subfamily.

In terms of biological role, hydrolyzes cytidine or uridine to ribose and cytosine or uracil, respectively. This is Pyrimidine-specific ribonucleoside hydrolase RihA from Shigella boydii serotype 4 (strain Sb227).